Reading from the N-terminus, the 330-residue chain is MALFNFQKPDKVIMIDSTDFEGKFEFRPLEPGYGLTVGNALRRVLLSALEGYAITSIRIEGVDHEFSTIPGVVEDVTEIILSLKQVRFKRQIEDIDNESVTIAISGKNQITAGDFQKYISGFQVLNPELVICNLDSKVNFNMEMTIEKGRGYVPAEENKKQNAAIGTIFTDSIFTPVKNVKYAIENFRVEQKTDYEKLVFEIKTDGSINPKDALTEAAKVLIHHFMLFSDERITLEADEIAQTESYDEESLHMRQLLKTKLVDMDLSVRALNCLKAAEVDTLGDLVSFNKNDLMKFRNFGKKSLTELDELVAIKNLTFGMDLAKYKLDKE.

The segment at 1-231 is alpha N-terminal domain (alpha-NTD); that stretch reads MALFNFQKPD…IHHFMLFSDE (231 aa). Residues 253–330 form an alpha C-terminal domain (alpha-CTD) region; the sequence is MRQLLKTKLV…DLAKYKLDKE (78 aa).

Belongs to the RNA polymerase alpha chain family. Homodimer. The RNAP catalytic core consists of 2 alpha, 1 beta, 1 beta' and 1 omega subunit. When a sigma factor is associated with the core the holoenzyme is formed, which can initiate transcription.

The catalysed reaction is RNA(n) + a ribonucleoside 5'-triphosphate = RNA(n+1) + diphosphate. In terms of biological role, DNA-dependent RNA polymerase catalyzes the transcription of DNA into RNA using the four ribonucleoside triphosphates as substrates. In Flavobacterium psychrophilum (strain ATCC 49511 / DSM 21280 / CIP 103535 / JIP02/86), this protein is DNA-directed RNA polymerase subunit alpha.